The sequence spans 1432 residues: DNA-directed RNA polymerase subunit beta (1432 aa).

It belongs to the RNA polymerase beta chain family. The RNAP catalytic core consists of 2 alpha, 1 beta, 1 beta' and 1 omega subunit. When a sigma factor is associated with the core the holoenzyme is formed, which can initiate transcription.

It carries out the reaction RNA(n) + a ribonucleoside 5'-triphosphate = RNA(n+1) + diphosphate. In terms of biological role, DNA-dependent RNA polymerase catalyzes the transcription of DNA into RNA using the four ribonucleoside triphosphates as substrates. The sequence is that of DNA-directed RNA polymerase subunit beta from Solibacter usitatus (strain Ellin6076).